The sequence spans 180 residues: Adenine phosphoribosyltransferase (180 aa).

The protein belongs to the purine/pyrimidine phosphoribosyltransferase family. In terms of assembly, homodimer.

It is found in the cytoplasm. The catalysed reaction is AMP + diphosphate = 5-phospho-alpha-D-ribose 1-diphosphate + adenine. It functions in the pathway purine metabolism; AMP biosynthesis via salvage pathway; AMP from adenine: step 1/1. Functionally, catalyzes a salvage reaction resulting in the formation of AMP, that is energically less costly than de novo synthesis. The protein is Adenine phosphoribosyltransferase of Marinobacter nauticus (strain ATCC 700491 / DSM 11845 / VT8) (Marinobacter aquaeolei).